The primary structure comprises 129 residues: PQTDKQVCIPPELPELLKTQPPDLIQWAAEYFGAMSRGEIPPVRLIIHADELAQMWKTLKIVCEVLSCDHDGGPPRIPFSTFQFLYTYIAEVDGEISSSHVSRMLNYIEQEVIGPDGLIKVNDFTQNPR.

The RIIa domain maps to 11–34 (PELPELLKTQPPDLIQWAAEYFGA).

Belongs to the ropporin family. As to quaternary structure, homodimer. Interacts with AKAP3. May interact with SPA17. Interacts with RHPN1. Interacts with FSCB; the interaction increases upon spermatozoa capacitation conditions. Interacts with CFAP61. In terms of processing, sumoylated, sumoylation decreases upon spermatozoa capacitation conditions.

The protein resides in the cell projection. It is found in the cilium. It localises to the flagellum. Important for male fertility. With ROPN1L, involved in fibrous sheath integrity and sperm motility, plays a role in PKA-dependent signaling processes required for spermatozoa capacitation. This Mesocricetus auratus (Golden hamster) protein is Ropporin-1.